The sequence spans 67 residues: Sec-independent protein translocase protein TatA (67 aa).

Residues 1–21 (MFGLGGQELVLILLIVLLLFG) traverse the membrane as a helical segment.

Belongs to the TatA/E family. As to quaternary structure, forms a complex with TatC.

It is found in the cell inner membrane. Part of the twin-arginine translocation (Tat) system that transports large folded proteins containing a characteristic twin-arginine motif in their signal peptide across membranes. TatA could form the protein-conducting channel of the Tat system. The sequence is that of Sec-independent protein translocase protein TatA from Chlorobaculum tepidum (strain ATCC 49652 / DSM 12025 / NBRC 103806 / TLS) (Chlorobium tepidum).